The sequence spans 313 residues: tRNA-cytidine(32) 2-sulfurtransferase (313 aa).

Residues 60–65 (SGGKDS) carry the PP-loop motif motif. Residues Cys135, Cys138, and Cys226 each coordinate [4Fe-4S] cluster.

Belongs to the TtcA family. Homodimer. It depends on Mg(2+) as a cofactor. [4Fe-4S] cluster is required as a cofactor.

It is found in the cytoplasm. The catalysed reaction is cytidine(32) in tRNA + S-sulfanyl-L-cysteinyl-[cysteine desulfurase] + AH2 + ATP = 2-thiocytidine(32) in tRNA + L-cysteinyl-[cysteine desulfurase] + A + AMP + diphosphate + H(+). The protein operates within tRNA modification. Catalyzes the ATP-dependent 2-thiolation of cytidine in position 32 of tRNA, to form 2-thiocytidine (s(2)C32). The sulfur atoms are provided by the cysteine/cysteine desulfurase (IscS) system. This chain is tRNA-cytidine(32) 2-sulfurtransferase, found in Delftia acidovorans (strain DSM 14801 / SPH-1).